The following is a 152-amino-acid chain: Superoxide dismutase [Cu-Zn] (152 aa).

Residues histidine 45, histidine 47, and histidine 62 each coordinate Cu cation. Cysteine 56 and cysteine 145 are joined by a disulfide. Zn(2+) contacts are provided by histidine 62, histidine 70, histidine 79, and aspartate 82. Histidine 119 serves as a coordination point for Cu cation.

Belongs to the Cu-Zn superoxide dismutase family. As to quaternary structure, homodimer. It depends on Cu cation as a cofactor. Zn(2+) serves as cofactor.

The protein resides in the cytoplasm. It catalyses the reaction 2 superoxide + 2 H(+) = H2O2 + O2. In terms of biological role, destroys radicals which are normally produced within the cells and which are toxic to biological systems. The polypeptide is Superoxide dismutase [Cu-Zn] (SODCC) (Paulownia kawakamii (Dragon tree)).